Here is a 329-residue protein sequence, read N- to C-terminus: Glutamyl-tRNA reductase (329 aa).

Substrate is bound by residues Thr-51–Arg-54, Ser-99, Glu-104–Gln-106, and Gln-110. Catalysis depends on Cys-52, which acts as the Nucleophile. Residue Gly-179–Ala-184 coordinates NADP(+).

It belongs to the glutamyl-tRNA reductase family. As to quaternary structure, homodimer.

The enzyme catalyses (S)-4-amino-5-oxopentanoate + tRNA(Glu) + NADP(+) = L-glutamyl-tRNA(Glu) + NADPH + H(+). Its pathway is porphyrin-containing compound metabolism; protoporphyrin-IX biosynthesis; 5-aminolevulinate from L-glutamyl-tRNA(Glu): step 1/2. In terms of biological role, catalyzes the NADPH-dependent reduction of glutamyl-tRNA(Glu) to glutamate 1-semialdehyde (GSA). In Fusobacterium nucleatum subsp. nucleatum (strain ATCC 25586 / DSM 15643 / BCRC 10681 / CIP 101130 / JCM 8532 / KCTC 2640 / LMG 13131 / VPI 4355), this protein is Glutamyl-tRNA reductase.